The sequence spans 183 residues: uncharacterized protein (183 aa).

Residues 1–23 (MGSSFVIDRSSSSPAPPRGPAPK) are disordered.

This is an uncharacterized protein from Saccharomyces cerevisiae (strain ATCC 204508 / S288c) (Baker's yeast).